Here is a 270-residue protein sequence, read N- to C-terminus: Glutamate racemase (270 aa).

Substrate is bound by residues 10–11 and 42–43; these read DS and YG. The Proton donor/acceptor role is filled by cysteine 73. A substrate-binding site is contributed by 74–75; sequence NT. Catalysis depends on cysteine 184, which acts as the Proton donor/acceptor. 185 to 186 contributes to the substrate binding site; the sequence is TH.

It belongs to the aspartate/glutamate racemases family.

The enzyme catalyses L-glutamate = D-glutamate. It functions in the pathway cell wall biogenesis; peptidoglycan biosynthesis. In terms of biological role, provides the (R)-glutamate required for cell wall biosynthesis. The protein is Glutamate racemase of Geobacter metallireducens (strain ATCC 53774 / DSM 7210 / GS-15).